Reading from the N-terminus, the 51-residue chain is Lipid-anchored plasma membrane protein CPP3 (51 aa).

Residues 1–28 (MRHHQNMHYAPQQQPVYVQQPPPRRESG) form a disordered region.

Belongs to the CYSTM1 family. In terms of processing, palmitoylated near the C-terminus.

Its subcellular location is the cell membrane. This chain is Lipid-anchored plasma membrane protein CPP3, found in Saccharomyces cerevisiae (strain ATCC 204508 / S288c) (Baker's yeast).